The chain runs to 230 residues: Orotidine 5'-phosphate decarboxylase (230 aa).

Substrate-binding positions include aspartate 11, lysine 34, 61–70, threonine 117, arginine 179, glutamine 188, glycine 208, and arginine 209; that span reads DLKLHDIPNT. Lysine 63 (proton donor) is an active-site residue.

Belongs to the OMP decarboxylase family. Type 1 subfamily. Homodimer.

The catalysed reaction is orotidine 5'-phosphate + H(+) = UMP + CO2. The protein operates within pyrimidine metabolism; UMP biosynthesis via de novo pathway; UMP from orotate: step 2/2. In terms of biological role, catalyzes the decarboxylation of orotidine 5'-monophosphate (OMP) to uridine 5'-monophosphate (UMP). This Streptococcus equi subsp. zooepidemicus (strain H70) protein is Orotidine 5'-phosphate decarboxylase.